The primary structure comprises 465 residues: Glycine--tRNA ligase (465 aa).

Substrate is bound by residues Arg-98 and Glu-174. ATP contacts are provided by residues 206-208, 216-221, 290-291, and 334-337; these read RNE, FRTREF, EL, and GADR. 221 to 225 serves as a coordination point for substrate; the sequence is FEQME. Residue 330–334 participates in substrate binding; the sequence is EPSLG.

It belongs to the class-II aminoacyl-tRNA synthetase family. As to quaternary structure, homodimer.

It localises to the cytoplasm. It catalyses the reaction tRNA(Gly) + glycine + ATP = glycyl-tRNA(Gly) + AMP + diphosphate. In terms of biological role, catalyzes the attachment of glycine to tRNA(Gly). This chain is Glycine--tRNA ligase, found in Agathobacter rectalis (strain ATCC 33656 / DSM 3377 / JCM 17463 / KCTC 5835 / VPI 0990) (Eubacterium rectale).